A 175-amino-acid chain; its full sequence is Acetyl-CoA decarbonylase/synthase complex subunit epsilon 2 (175 aa).

This sequence belongs to the CdhB family. As to quaternary structure, heterotetramer of two alpha and two epsilon subunits. The ACDS complex is made up of alpha, epsilon, beta, gamma and delta subunits with a probable stoichiometry of (alpha(2)epsilon(2))(4)-beta(8)-(gamma(1)delta(1))(8).

Its function is as follows. Part of a complex that catalyzes the reversible cleavage of acetyl-CoA, allowing autotrophic growth from CO(2). The alpha-epsilon subcomponent functions as a carbon monoxide dehydrogenase. The precise role of the epsilon subunit is unclear; it may have a stabilizing role within the alpha(2)epsilon(2) component and/or be involved in electron transfer to FAD during a potential FAD-mediated CO oxidation. This Archaeoglobus fulgidus (strain ATCC 49558 / DSM 4304 / JCM 9628 / NBRC 100126 / VC-16) protein is Acetyl-CoA decarbonylase/synthase complex subunit epsilon 2 (cdhB2).